A 139-amino-acid chain; its full sequence is Holo-[acyl-carrier-protein] synthase (139 aa).

Residues Asp-8 and Glu-61 each contribute to the Mg(2+) site.

The protein belongs to the P-Pant transferase superfamily. AcpS family. Requires Mg(2+) as cofactor.

Its subcellular location is the cytoplasm. It carries out the reaction apo-[ACP] + CoA = holo-[ACP] + adenosine 3',5'-bisphosphate + H(+). Functionally, transfers the 4'-phosphopantetheine moiety from coenzyme A to a Ser of acyl-carrier-protein. The polypeptide is Holo-[acyl-carrier-protein] synthase (Rhodopseudomonas palustris (strain BisA53)).